Reading from the N-terminus, the 372-residue chain is MSKKILFLIKVIVFIFTTFSLPLYAEKIRDLTSIQGIRDNPLIGYGLIVGLDGTGDQSTQAPFTNQSLKNMLSQLGVSIPSNTNMNTKNVAAVIVTANLPPFSHAGEKIDVVVSSMGNARSLKGGTLLMTPLKGANNQIYAIAQGNILVSEKNNKKSKIHNFYSNQVNSGKIHHGATIEREIDNNFGKQKTINLQLNQENFSTAQRISDMINTKYPDTATPINSKTVQLNTSANNDVQVHMLSNIQDIDISLPSQEAKVVVNSRTGSIVINQSVRLGSCVVSNGNMSIIVHQIKNKKRDLYFLKSFNKNIKKDQSIEDMADKNYMNDIATNKENLHNIVRALNKLGTKPDELMSILQLMKSAGCLNAKLEIV.

The N-terminal stretch at 1–25 (MSKKILFLIKVIVFIFTTFSLPLYA) is a signal peptide.

The protein belongs to the FlgI family. As to quaternary structure, the basal body constitutes a major portion of the flagellar organelle and consists of four rings (L,P,S, and M) mounted on a central rod.

It localises to the bacterial flagellum basal body. Its function is as follows. Assembles around the rod to form the L-ring and probably protects the motor/basal body from shearing forces during rotation. This Buchnera aphidicola subsp. Acyrthosiphon pisum (strain APS) (Acyrthosiphon pisum symbiotic bacterium) protein is Flagellar P-ring protein (flgI).